We begin with the raw amino-acid sequence, 206 residues long: Undecaprenyl-diphosphatase (206 aa).

The next 5 helical transmembrane spans lie at 5–25 (YYWILLLLFLILSIYIKLIGG), 53–73 (FLSKYGREYVWIPVTALLLIF), 79–99 (IGITLVISFVIAIVLGEVSKY), 138–158 (VTLLLTSPKWMWILGIIEAVL), and 164–184 (VYVGVHWPLDVIAGWLLGSWI).

The protein resides in the cell membrane. The enzyme catalyses di-trans,octa-cis-undecaprenyl diphosphate + H2O = di-trans,octa-cis-undecaprenyl phosphate + phosphate + H(+). This Sulfolobus acidocaldarius (strain ATCC 33909 / DSM 639 / JCM 8929 / NBRC 15157 / NCIMB 11770) protein is Undecaprenyl-diphosphatase (sepP).